Consider the following 392-residue polypeptide: MEPVQYSYEDFARLPTTVFWIMGYDMLGVPKTRSRRILYWIYRFLCLASHGVCVGVMVFRMVEAKTIDNVSLIMRYATLVTYIINSDTKFATVLQRSAIQSLNSKLAELYPKTTLDRIYHRVNDHYWTKSFVYLVIIYIGSSIMVVIGPIITSIIAYFTHNVFTYMHCYPYFLYDPEKDPVWIYISIYALEWLHSTQMVISNIGADIWLLYFQVQINLHFRGIIRSLADHKPSVKHDQEDRKFIAKIVDKQVHLVSLQNDLNGIFGKSLLLSLLTTAAVICTVAVYTLIQGPTLEGFTYVIFIGTSVMQVYLVCYYGQQVLDLSGEVAHAVYNHDFHDASIAYKRYLLIIIIRAQQPVELNAMGYLSISLDTFKQLMSVSYRVITMLMQMIQ.

Topologically, residues 1–36 are cytoplasmic; the sequence is MEPVQYSYEDFARLPTTVFWIMGYDMLGVPKTRSRR. Residues 37-57 form a helical membrane-spanning segment; the sequence is ILYWIYRFLCLASHGVCVGVM. The Extracellular segment spans residues 58 to 69; it reads VFRMVEAKTIDN. Asn69 carries an N-linked (GlcNAc...) asparagine glycan. The chain crosses the membrane as a helical span at residues 70–90; the sequence is VSLIMRYATLVTYIINSDTKF. Over 91–130 the chain is Cytoplasmic; sequence ATVLQRSAIQSLNSKLAELYPKTTLDRIYHRVNDHYWTKS. A helical membrane pass occupies residues 131–151; that stretch reads FVYLVIIYIGSSIMVVIGPII. The Extracellular segment spans residues 152–179; it reads TSIIAYFTHNVFTYMHCYPYFLYDPEKD. The helical transmembrane segment at 180-200 threads the bilayer; it reads PVWIYISIYALEWLHSTQMVI. Residues 201–268 are Cytoplasmic-facing; that stretch reads SNIGADIWLL…NDLNGIFGKS (68 aa). The helical transmembrane segment at 269–289 threads the bilayer; the sequence is LLLSLLTTAAVICTVAVYTLI. Residues 290 to 295 are Extracellular-facing; sequence QGPTLE. The helical transmembrane segment at 296–316 threads the bilayer; it reads GFTYVIFIGTSVMQVYLVCYY. Over 317 to 363 the chain is Cytoplasmic; it reads GQQVLDLSGEVAHAVYNHDFHDASIAYKRYLLIIIIRAQQPVELNAM. Residues 364 to 384 traverse the membrane as a helical segment; that stretch reads GYLSISLDTFKQLMSVSYRVI. Over 385–392 the chain is Extracellular; the sequence is TMLMQMIQ.

The protein belongs to the insect chemoreceptor superfamily. Heteromeric odorant receptor channel (TC 1.A.69) family. Or49a subfamily. As to quaternary structure, interacts with Orco. Complexes exist early in the endomembrane system in olfactory sensory neurons (OSNs), coupling these complexes to the conserved ciliary trafficking pathway. In terms of tissue distribution, expressed in olfactory sensory neurons in the antenna.

Its subcellular location is the cell membrane. In terms of biological role, odorant receptor which mediates acceptance or avoidance behavior, depending on its substrates. The odorant receptor repertoire encodes a large collection of odor stimuli that vary widely in identity, intensity, and duration. May form a complex with Orco to form odorant-sensing units, providing sensitive and prolonged odorant signaling and calcium permeability. The chain is Odorant receptor 85f (Or85f) from Drosophila melanogaster (Fruit fly).